Here is a 152-residue protein sequence, read N- to C-terminus: Protein Smg homolog (152 aa).

It belongs to the Smg family.

The sequence is that of Protein Smg homolog from Bordetella avium (strain 197N).